Consider the following 919-residue polypeptide: Eukaryotic translation initiation factor 3 subunit C (919 aa).

A disordered region spans residues 1–28 (MSRFFANGSDSESESSEEEVQAPNFNKA). A compositionally biased stretch (acidic residues) spans 11–20 (SESESSEEEV). Phosphoserine occurs at positions 34, 165, and 177. The segment at 154 to 275 (LSRFRENPQE…EQKIKLRKRA (122 aa)) is disordered. The segment covering 162–171 (QEESENEDEE) has biased composition (acidic residues). Over residues 210–236 (ADDEDSDESIDWDPDTESETESSEDEN) the composition is skewed to acidic residues. The span at 241 to 269 (MRERFLKRSTEKDDKDDDKRKDKRKEQKI) shows a compositional bias: basic and acidic residues. The PCI domain occupies 640 to 816 (FHMHINLELL…ETVVMHRSEP (177 aa)). Residues 848–919 (FFQRGNMGNR…QQQVQTIDEE (72 aa)) form a disordered region. Positions 883–894 (QRNRNQRGHHKN) are enriched in basic residues. The span at 895-919 (QQNQNQQQQQQHQREQQQVQTIDEE) shows a compositional bias: low complexity.

Belongs to the eIF-3 subunit C family. Component of the eukaryotic translation initiation factor 3 (eIF-3) complex. The eIF-3 complex interacts with pix.

The protein resides in the cytoplasm. In terms of biological role, component of the eukaryotic translation initiation factor 3 (eIF-3) complex, which is involved in protein synthesis of a specialized repertoire of mRNAs and, together with other initiation factors, stimulates binding of mRNA and methionyl-tRNAi to the 40S ribosome. The eIF-3 complex specifically targets and initiates translation of a subset of mRNAs involved in cell proliferation. In Drosophila willistoni (Fruit fly), this protein is Eukaryotic translation initiation factor 3 subunit C.